The chain runs to 201 residues: dCTP deaminase, dUMP-forming (201 aa).

Residues 101–106 (KSSLGR), Asp-119, 127–129 (TLE), Gln-148, Tyr-162, and Gln-174 each bind dCTP. The active-site Proton donor/acceptor is the Glu-129. Residues 166 to 183 (EYSSRYQGQRGPTASRSF) show a composition bias toward polar residues. The tract at residues 166 to 201 (EYSSRYQGQRGPTASRSFLNFHRTDVSGTEAGRSSS) is disordered.

The protein belongs to the dCTP deaminase family. Homotrimer.

The catalysed reaction is dCTP + 2 H2O = dUMP + NH4(+) + diphosphate. The protein operates within pyrimidine metabolism; dUMP biosynthesis; dUMP from dCTP: step 1/1. In terms of biological role, bifunctional enzyme that catalyzes both the deamination of dCTP to dUTP and the hydrolysis of dUTP to dUMP without releasing the toxic dUTP intermediate. The sequence is that of dCTP deaminase, dUMP-forming from Leifsonia xyli subsp. xyli (strain CTCB07).